A 388-amino-acid polypeptide reads, in one-letter code: uncharacterized protein (388 aa).

Positions 18, 24, 27, and 99 each coordinate [4Fe-4S] cluster. Residues Gln-212, Glu-262, and Asn-313 each contribute to the S-adenosyl-L-methionine site. Cys-343 functions as the Nucleophile in the catalytic mechanism.

It belongs to the class I-like SAM-binding methyltransferase superfamily. RNA M5U methyltransferase family.

This is an uncharacterized protein from Bdellovibrio bacteriovorus (strain ATCC 15356 / DSM 50701 / NCIMB 9529 / HD100).